Consider the following 247-residue polypeptide: (7aS)-7a-methyl-1,5-dioxo-2,3,5,6,7,7a-hexahydro-1H-indene-carboxyl-CoA hydrolase (247 aa).

The protein belongs to the enoyl-CoA hydratase/isomerase family.

It catalyses the reaction (7aS)-7a-methyl-1,5-dioxo-2,3,5,6,7,7a-hexahydro-1H-indene-carboxyl-CoA + H2O = (3E)-2-(2-carboxylatoethyl)-3-methyl-6-oxocyclohex-1-ene-1-carboxyl-CoA + H(+). Its pathway is steroid metabolism; cholesterol degradation. Its function is as follows. Involved in the final steps of cholesterol and steroid degradation. Catalyzes the hydrolytic ring D opening of (7aS)-7a-methyl-1,5-dioxo-2,3,5,6,7,7a-hexahydro-1H-indene-carboxyl-CoA (HIEC-CoA) to (3E)-2-(2-carboxylatoethyl)-3-methyl-6-oxocyclohex-1-ene-1-carboxyl-CoA (COCHEA-CoA). The chain is (7aS)-7a-methyl-1,5-dioxo-2,3,5,6,7,7a-hexahydro-1H-indene-carboxyl-CoA hydrolase from Mycobacterium tuberculosis (strain ATCC 25618 / H37Rv).